The sequence spans 688 residues: MELEVPDEAESAEAGAVTAEAAWSAESGAAAGMTQKKAILAEAPLVTGQPGPGHGKKLGHRGVDASGETTYKKTTSSTLKGAIQLGIGYTVGNLSSKPERDVLMQDFYVVESIFFPSEGSNLTPAHHFQDFRFKTYAPVAFRYFRELFGIRPDDYLYSLCNEPLIELSNPGASGSVFYVTSDDEFIIKTVMHKEAEFLQKLLPGYYMNLNQNPRTLLPKFYGLYCVQSGGKNIRVVVMNNVLPRVVKMHLKFDLKGSTYKRRASKKEKEKSLPTYKDLDFMQDMPEGLLLDSDTFGALVKTLQRDCLVLESFKIMDYSLLLGVHNIDQQERERQAEGAQSKADEKRPVAQKALYSTARESIQGGAARGEAIETDDTMGGIPAVNGRGERLLLHIGIIDILQSYRFIKKLEHTWKALVHDGDTVSVHRPSFYAERFFKFMSSTVFRKSSSLKSSPSKKGRGALLAVKPLGPTAAFSASQIPSEREDVQYDLRGARSYPTLEDEGRPDLLPCTPPSFEEATTASIATTLSSTSLSIPERSPSDTSEQPRYRRRTQSSGQDGRPQEELHAEDLQKITVQVEPVCGVGVVVPKEQGAGVEVPPSGASAAATVEVDAASQASEPASQASDEEDAPSTDIYFFAHGRYWLFSPRRRRLRAVTPSHTGAPTDGRSWVYSPLHYSARPASDGESDT.

Residues 48–71 form a disordered region; the sequence is GQPGPGHGKKLGHRGVDASGETTY. The PIPK domain occupies 75 to 443; sequence TSSTLKGAIQ…RFFKFMSSTV (369 aa). Residues Lys265 and Lys268 each carry the N6-acetyllysine modification. The residue at position 459 (Arg459) is an Asymmetric dimethylarginine; alternate. Position 459 is an omega-N-methylarginine; alternate (Arg459). Positions 525–534 are enriched in low complexity; it reads TTLSSTSLSI. Disordered stretches follow at residues 525–565 and 592–629; these read TTLS…QEEL and GAGV…EEDA. Ser554 is subject to Phosphoserine. The segment covering 602–623 has biased composition (low complexity); that stretch reads ASAAATVEVDAASQASEPASQA. Tyr635 carries the phosphotyrosine; by EGFR modification. Tyr671 is subject to Phosphotyrosine; by CSK. Position 672 is a phosphoserine; by CDK5, MAPK1 and CDK1 (Ser672). Residues Ser682 and Ser686 each carry the phosphoserine modification. Thr688 is modified (phosphothreonine).

In terms of assembly, interacts with TLN1. Interacts with TLN2; interaction stimulates 1-phosphatidylinositol-4-phosphate 5-kinase activity. May compete with beta-integrins for the same binding site on TLN1 and TLN2. Interacts with ARF6; interaction stimulates 1-phosphatidylinositol-4-phosphate 5-kinase activity. Interacts with AP2B1. Interacts with AP2M1; phosphorylation of PIP5K1C by CSK disrupts the interaction; clathrin competes with PIP5K1C. Interacts with CDH1. Interacts with CSK. Interacts with PLCG1; interaction is abolished upon EGF stimulation. Interacts with LAPTM4B; promotes SNX5 association with LAPTM4B; kinase activity of PIP5K1C is required; interaction is regulated by phosphatidylinositol 4,5-bisphosphate generated by PIP5K1C. Post-translationally, phosphorylation on Ser-672 negatively regulates binding to TLN2 and is strongly stimulated in mitosis. Phosphorylation on Tyr-671 is necessary for targeting to focal adhesions. Phosphorylation on Ser-672 and Tyr-671 are mutually exclusive. Phosphorylated by SYK and CSK. Tyrosine phosphorylation is enhanced by PTK2 signaling. Phosphorylated at Tyr-635 upon EGF stimulation. Some studies suggest that phosphorylation on Tyr-671 enhances binding to tailins (TLN1 and TLN2); others that phosphorylation at Tyr-671 does not directly enhance binding to tailins (TLN1 and TLN2) but may act indirectly by inhibiting phosphorylation at Ser-672. In terms of processing, acetylation at Lys-265 and Lys-268 seems to decrease lipid kinase activity. Deacetylation of these sites by SIRT1 positively regulates the exocytosis of TSH-containing granules from pituitary cells.

The protein localises to the cell membrane. It is found in the endomembrane system. It localises to the cytoplasm. Its subcellular location is the cell junction. The protein resides in the focal adhesion. The protein localises to the adherens junction. It is found in the cell projection. It localises to the ruffle membrane. Its subcellular location is the phagocytic cup. The protein resides in the uropodium. The enzyme catalyses a 1,2-diacyl-sn-glycero-3-phospho-(1D-myo-inositol 4-phosphate) + ATP = a 1,2-diacyl-sn-glycero-3-phospho-(1D-myo-inositol-4,5-bisphosphate) + ADP + H(+). It carries out the reaction 1-octadecanoyl-2-(5Z,8Z,11Z,14Z)-eicosatetraenoyl-sn-glycero-3-phospho-1D-myo-inositol 4-phosphate + ATP = 1-octadecanoyl-2-(5Z,8Z,11Z,14Z)-eicosatetraenoyl-sn-glycero-3-phospho-1D-myo-inositol 4,5-bisphosphate + ADP + H(+). It catalyses the reaction 1-octadecanoyl-2-(9Z)-octadecenoyl-sn-glycero-3-phospho-1D-myo-inositol 4-phosphate + ATP = 1-octadecanoyl-2-(9Z)-octadecenoyl-sn-glycero-3-phospho-1D-myo-inositol 4,5-bisphosphate + ADP + H(+). The catalysed reaction is 1-octadecanoyl-2-(9Z)-octadecenoyl-sn-glycero-3-phospho-1D-myo-inositol + ATP = 1-octadecanoyl-2-(9Z)-octadecenoyl-sn-glycero-3-phospho-1D-myo-inositol 5-phosphate + ADP + H(+). The enzyme catalyses 1-octadecanoyl-2-(9Z,12Z)-octadecadienoyl-sn-glycero-3-phospho-1D-myo-inositol + ATP = 1-octadecanoyl-2-(9Z,12Z)-octadecadienoyl-sn-glycero-3-phospho-1D-myo-inositol 5-phosphate + ADP + H(+). It carries out the reaction 1-octadecanoyl-2-(5Z,8Z,11Z,14Z-eicosatetraenoyl)-sn-glycero-3-phospho-(1D-myo-inositol) + ATP = 1-octadecanoyl-2-(5Z,8Z,11Z,14Z)-eicosatetraenoyl-sn-glycero-3-phospho-1D-myo-inositol 5-phosphate + ADP + H(+). It catalyses the reaction 1,2-di-(9Z,12Z)-octadecadienoyl-sn-glycero-3-phospho-1D-myo-inositol + ATP = 1,2-di(9Z,12Z)-octadecadienoyl-sn-glycero-3-phospho-1D-myo-inositol 5-phosphate + ADP + H(+). In terms of biological role, catalyzes the phosphorylation of phosphatidylinositol 4-phosphate (PtdIns(4)P/PI4P) to form phosphatidylinositol 4,5-bisphosphate (PtdIns(4,5)P2/PIP2), a lipid second messenger that regulates several cellular processes such as signal transduction, vesicle trafficking, actin cytoskeleton dynamics, cell adhesion, and cell motility. PtdIns(4,5)P2 can directly act as a second messenger or can be utilized as a precursor to generate other second messengers: inositol 1,4,5-trisphosphate (IP3), diacylglycerol (DAG) or phosphatidylinositol-3,4,5-trisphosphate (PtdIns(3,4,5)P3/PIP3). PIP5K1A-mediated phosphorylation of PtdIns(4)P is the predominant pathway for PtdIns(4,5)P2 synthesis. Together with PIP5K1A, is required for phagocytosis, both enzymes regulating different types of actin remodeling at sequential steps. Promotes particle attachment by generating the pool of PtdIns(4,5)P2 that induces controlled actin depolymerization to facilitate Fc-gamma-R clustering. Mediates RAC1-dependent reorganization of actin filaments. Required for synaptic vesicle transport. Controls the plasma membrane pool of PtdIns(4,5)P2 implicated in synaptic vesicle endocytosis and exocytosis. Plays a role in endocytosis mediated by clathrin and AP-2 (adaptor protein complex 2). Required for clathrin-coated pits assembly at the synapse. Participates in cell junction assembly. Modulates adherens junctions formation by facilitating CDH1/cadherin trafficking. Required for focal adhesion dynamics. Modulates the targeting of talins (TLN1 and TLN2) to the plasma membrane and their efficient assembly into focal adhesions. Regulates the interaction between talins (TLN1 and TLN2) and beta-integrins. Required for uropodium formation and retraction of the cell rear during directed migration. Has a role in growth factor-stimulated directional cell migration and adhesion. Required for talin assembly into nascent adhesions forming at the leading edge toward the direction of the growth factor. Negative regulator of T-cell activation and adhesion. Negatively regulates integrin alpha-L/beta-2 (LFA-1) polarization and adhesion induced by T-cell receptor. Together with PIP5K1A has a role during embryogenesis and together with PIP5K1B may have a role immediately after birth. The sequence is that of Phosphatidylinositol 4-phosphate 5-kinase type-1 gamma from Rattus norvegicus (Rat).